The sequence spans 347 residues: Quinolinate synthase (347 aa).

The iminosuccinate site is built by His47 and Ser68. [4Fe-4S] cluster is bound at residue Cys113. Residues 139–141 (YAN) and Ser156 contribute to the iminosuccinate site. Cys200 lines the [4Fe-4S] cluster pocket. Iminosuccinate-binding positions include 226-228 (HPE) and Thr243. Cys297 provides a ligand contact to [4Fe-4S] cluster.

This sequence belongs to the quinolinate synthase family. Type 1 subfamily. [4Fe-4S] cluster serves as cofactor.

The protein resides in the cytoplasm. The catalysed reaction is iminosuccinate + dihydroxyacetone phosphate = quinolinate + phosphate + 2 H2O + H(+). Its pathway is cofactor biosynthesis; NAD(+) biosynthesis; quinolinate from iminoaspartate: step 1/1. In terms of biological role, catalyzes the condensation of iminoaspartate with dihydroxyacetone phosphate to form quinolinate. In Shigella dysenteriae serotype 1 (strain Sd197), this protein is Quinolinate synthase.